A 563-amino-acid chain; its full sequence is Src substrate protein p85 (563 aa).

6 Cortactin repeats span residues 89 to 125 (ASHG…SQVD), 126 to 162 (SVKG…SQKD), 163 to 199 (YSSG…SQKD), 200 to 236 (YSKG…SQKD), 237 to 273 (YVKG…SQKD), and 274 to 310 (YKSG…SQQD). The Cortactin 7; truncated repeat unit spans residues 311 to 333 (YSKGFGGKYGVQKDRMDKNAATF). The interval 331-477 (ATFEDIEKPT…EAVSQREAEY (147 aa)) is disordered. The stretch at 349–410 (VERVANKTSS…EEQAKAKKQT (62 aa)) forms a coiled coil. The segment covering 366–405 (LAKEKEQEDRRKAEAERAQRMAREKQEQEEARRKLEEQAK) has biased composition (basic and acidic residues). One can recognise an SH3 domain in the interval 505–563 (ELGITAIALYDYQAAGDDEISFDPDDIITNIEMIDDGWWRGVCKGRYGLFPANYVELRQ).

In terms of processing, acetylated. In normal cells, appears to be phosphorylated on serine and threonine; in cells expressing activated forms of pp60-src, they become heavily phosphorylated on tyrosine in vitro. Tyrosine phosphorylation in transformed cells may contribute to cellular growth regulation and transformation.

The protein resides in the cytoplasm. It localises to the cytoskeleton. It is found in the cell projection. The protein localises to the lamellipodium. Its subcellular location is the ruffle. The protein resides in the dendrite. It localises to the cell membrane. It is found in the podosome. The protein localises to the cell junction. Its subcellular location is the focal adhesion. The protein resides in the membrane. It localises to the clathrin-coated pit. It is found in the dendritic spine. The protein localises to the cell cortex. Its subcellular location is the endoplasmic reticulum. In terms of biological role, contributes to the organization of the actin cytoskeleton and cell shape. Plays a role in the formation of lamellipodia and in cell migration. Plays a role in the regulation of neuron morphology, axon growth and formation of neuronal growth cones, and may play a role in the regulation of neuronal spine density. Plays a role in focal adhesion assembly and turnover. Plays a role in intracellular protein transport and endocytosis, and in modulating the levels of potassium channels present at the cell membrane. Plays a role in endocytosis via clathrin-coated pits. The polypeptide is Src substrate protein p85 (CTTN1) (Gallus gallus (Chicken)).